The chain runs to 291 residues: Tyrosine recombinase XerD (291 aa).

Residues 1–82 (MEEGLIDRLL…ACKRLYIWME (82 aa)) enclose the Core-binding (CB) domain. In terms of domain architecture, Tyr recombinase spans 103 to 285 (NIPTLITEQQ…ANVWLQGVVK (183 aa)). Residues arginine 143, lysine 167, histidine 237, arginine 240, and histidine 263 contribute to the active site. Catalysis depends on tyrosine 272, which acts as the O-(3'-phospho-DNA)-tyrosine intermediate.

This sequence belongs to the 'phage' integrase family. XerD subfamily. In terms of assembly, forms a cyclic heterotetrameric complex composed of two molecules of XerC and two molecules of XerD.

The protein localises to the cytoplasm. In terms of biological role, site-specific tyrosine recombinase, which acts by catalyzing the cutting and rejoining of the recombining DNA molecules. The XerC-XerD complex is essential to convert dimers of the bacterial chromosome into monomers to permit their segregation at cell division. It also contributes to the segregational stability of plasmids. This Neisseria meningitidis serogroup B (strain ATCC BAA-335 / MC58) protein is Tyrosine recombinase XerD.